The following is a 593-amino-acid chain: UvrABC system protein C (593 aa).

One can recognise a GIY-YIG domain in the interval 17–94 (MEPGCYLMKD…IKQYQPRYNI (78 aa)). The region spanning 199-234 (KTILKSLEERMLTASESLDFERAKEYRDLIQHIQNL) is the UVR domain.

Belongs to the UvrC family. As to quaternary structure, interacts with UvrB in an incision complex.

Its subcellular location is the cytoplasm. Functionally, the UvrABC repair system catalyzes the recognition and processing of DNA lesions. UvrC both incises the 5' and 3' sides of the lesion. The N-terminal half is responsible for the 3' incision and the C-terminal half is responsible for the 5' incision. The polypeptide is UvrABC system protein C (Staphylococcus aureus (strain MSSA476)).